An 843-amino-acid chain; its full sequence is Transmembrane protease serine 7 (843 aa).

Residues 1 to 76 are Cytoplasmic-facing; that stretch reads MDKENSDVSA…KVPFWNVQNK (76 aa). Residues 27–67 form a disordered region; it reads AQKKLPVRRPPLPGRRLPLPGRRPPQRPIGKAKPKKQSKKK. Residues 56 to 67 are compositionally biased toward basic residues; the sequence is GKAKPKKQSKKK. The helical; Signal-anchor for type II membrane protein transmembrane segment at 77-97 threads the bilayer; the sequence is IILFTVFLFILAVIAWTLLWL. Over 98 to 843 the chain is Extracellular; the sequence is YISKTESKDA…WIHKYVPSLL (746 aa). Residues 106-234 form the SEA domain; it reads DAFYFAGMFR…DSVVLNAGLR (129 aa). 12 disulfides stabilise this stretch: Cys-247/Cys-273, Cys-299/Cys-322, Cys-365/Cys-396, Cys-484/Cys-496, Cys-491/Cys-509, Cys-503/Cys-518, Cys-525/Cys-544, Cys-538/Cys-553, Cys-559/Cys-571, Cys-566/Cys-585, Cys-579/Cys-594, and Cys-631/Cys-647. CUB domains follow at residues 247–360 and 365–481; these read CSQY…FEVI and CENT…YNIS. LDL-receptor class A domains lie at 483–519, 517–554, and 558–595; these read PCPV…LFCV, FCVS…QNCT, and PCNN…EGCT. One can recognise a Peptidase S1 domain in the interval 606 to 840; sequence IIGGTDTLEG…FVPWIHKYVP (235 aa). Residues His-646 and Asp-694 each act as charge relay system in the active site. Disulfide bonds link Cys-730–Cys-796 and Cys-762–Cys-775. The active-site Charge relay system is Ser-790.

Belongs to the peptidase S1 family. Forms a heterodimer with SERPINA5. In terms of processing, N-glycosylated. Expressed in brain, ovary, testis, salivary gland, trachea and lung.

The protein localises to the cell membrane. Serine protease which preferentially hydrolyzes peptides with Arg at the P1 position. The sequence is that of Transmembrane protease serine 7 (TMPRSS7) from Homo sapiens (Human).